Reading from the N-terminus, the 200-residue chain is Small ribosomal subunit protein uS4c (200 aa).

One can recognise an S4 RNA-binding domain in the interval 88–148; sequence IRLDNTIFNL…PKSYYIFKLC (61 aa).

It belongs to the universal ribosomal protein uS4 family. Part of the 30S ribosomal subunit.

The protein localises to the plastid. It localises to the apicoplast. One of the primary rRNA binding proteins, it binds directly to 16S rRNA where it nucleates assembly of the body of the 30S subunit. The protein is Small ribosomal subunit protein uS4c (rps4) of Eimeria tenella (Coccidian parasite).